We begin with the raw amino-acid sequence, 277 residues long: MEMO1 family protein TM_0087 (277 aa).

It belongs to the MEMO1 family.

The protein is MEMO1 family protein TM_0087 of Thermotoga maritima (strain ATCC 43589 / DSM 3109 / JCM 10099 / NBRC 100826 / MSB8).